The sequence spans 89 residues: Small ribosomal subunit protein uS15 (89 aa).

The protein belongs to the universal ribosomal protein uS15 family. In terms of assembly, part of the 30S ribosomal subunit. Forms a bridge to the 50S subunit in the 70S ribosome, contacting the 23S rRNA.

One of the primary rRNA binding proteins, it binds directly to 16S rRNA where it helps nucleate assembly of the platform of the 30S subunit by binding and bridging several RNA helices of the 16S rRNA. Its function is as follows. Forms an intersubunit bridge (bridge B4) with the 23S rRNA of the 50S subunit in the ribosome. The protein is Small ribosomal subunit protein uS15 of Escherichia coli O139:H28 (strain E24377A / ETEC).